Here is a 294-residue protein sequence, read N- to C-terminus: ATP phosphoribosyltransferase (294 aa).

The protein belongs to the ATP phosphoribosyltransferase family. Long subfamily. Mg(2+) serves as cofactor.

It is found in the cytoplasm. The catalysed reaction is 1-(5-phospho-beta-D-ribosyl)-ATP + diphosphate = 5-phospho-alpha-D-ribose 1-diphosphate + ATP. Its pathway is amino-acid biosynthesis; L-histidine biosynthesis; L-histidine from 5-phospho-alpha-D-ribose 1-diphosphate: step 1/9. With respect to regulation, feedback inhibited by histidine. Catalyzes the condensation of ATP and 5-phosphoribose 1-diphosphate to form N'-(5'-phosphoribosyl)-ATP (PR-ATP). Has a crucial role in the pathway because the rate of histidine biosynthesis seems to be controlled primarily by regulation of HisG enzymatic activity. This chain is ATP phosphoribosyltransferase, found in Chlorobium luteolum (strain DSM 273 / BCRC 81028 / 2530) (Pelodictyon luteolum).